Reading from the N-terminus, the 221-residue chain is Abscisic acid receptor PYL1 (221 aa).

A compositionally biased stretch (low complexity) spans 1–11; that stretch reads MANSESSSSPV. A disordered region spans residues 1-22; it reads MANSESSSSPVNEEENSQRIST. Ala2 bears the N-acetylalanine mark. The segment at 50-206 is START-like; that stretch reads YQLGNGRCSS…NLQKLASITE (157 aa). Abscisate contacts are provided by residues Lys86, 116–121, 143–149, and Glu171; these read ANTSRE and RLRNYKS. Residues 112-116 carry the Gate loop motif; sequence SGLPA. Residues 142 to 144 carry the Latch loop motif; that stretch reads HRL.

Belongs to the PYR/PYL/RCAR abscisic acid intracellular receptor family. Homodimer. Binds ABA on one subunit only. Interacts with HAB1, ABI1 and ABI2, and possibly with other PP2Cs. Binds to CARs protein in an ABA-independent manner, both at the plasma membrane and in the nucleus. Interacts directly with CAR1 and CAR4.

The protein resides in the cytoplasm. The protein localises to the nucleus. It localises to the cell membrane. Functionally, receptor for abscisic acid (ABA) required for ABA-mediated responses such as stomatal closure and germination inhibition. Inhibits the activity of group-A protein phosphatases type 2C (PP2Cs) when activated by ABA. Can be activated by both (-)-ABA and (+)-ABA. This is Abscisic acid receptor PYL1 (PYL1) from Arabidopsis thaliana (Mouse-ear cress).